The sequence spans 292 residues: S-adenosyl-L-methionine-dependent Diels-Alderase iccD (292 aa).

The chain crosses the membrane as a helical span at residues Leu240 to Ile262.

It belongs to the class I-like SAM-binding methyltransferase superfamily. Erg6/SMT family. It depends on S-adenosyl-L-methionine as a cofactor.

Its subcellular location is the membrane. It carries out the reaction 3-[(2E,4E,8S,10E,12Z)-4,8-dimethyltetradeca-2,4,10,12-tetraenoyl]-4-hydroxy-5-(4-hydroxyphenyl)-1,2-dihydropyridin-2-one = 8-epi-ilicicolin H. It functions in the pathway mycotoxin biosynthesis. In terms of biological role, S-adenosyl-l-methionine-dependent Diels-Alderase; part of the gene cluster that mediates the biosynthesis of ilicicolin H, a 4-hydroxy-2-pyridonealkaloid that has potent and broad antifungal activities by inhibiting the mitochondrial respiration chain. IccD catalyzes the Diels-Alder reaction that converts the acyclic 2-pyridone intermediate to 8-epi-ilicicolin H. The biosynthesis of ilicicolin H starts with formation of the tetramic acid by the hybrid PKS-NRPS synthetase iccA with the partnering trans-enoyl reductase iccB since iccA lacks a designated enoylreductase (ER) domain. The cytochrome P450 monooxygenase iccC then catalyzes the ring expansion of the tetramate to the acyclic 2-pyridone. The pericyclase iccD further converts the acyclic 2-pyridone into 8-epi-ilicicolin H. Finally, the epimerase iccE converts 8-epi-ilicicolin H into ilicicolin H via epimerization. IccA to iccE are sufficient for ilicicolin H biosynthesis and the roles of the remaining enzymes, iccF, iccG and iccH within the pathway have still to be determined. The protein is S-adenosyl-L-methionine-dependent Diels-Alderase iccD of Talaromyces variabilis (Penicillium variabile).